Reading from the N-terminus, the 308-residue chain is Phosphatidate cytidylyltransferase (308 aa).

8 helical membrane-spanning segments follow: residues 30-50 (FLVL…LGFI), 73-93 (PLST…FLSI), 100-120 (PGFF…WSIF), 127-147 (IGAL…GIPI), 167-187 (IWWA…GYFF), 205-225 (TVVG…IFFL), 235-255 (FPMP…GFFG), and 280-300 (MLDT…FLLI).

The protein belongs to the CDS family.

It is found in the cell membrane. It catalyses the reaction a 1,2-diacyl-sn-glycero-3-phosphate + CTP + H(+) = a CDP-1,2-diacyl-sn-glycerol + diphosphate. The protein operates within phospholipid metabolism; CDP-diacylglycerol biosynthesis; CDP-diacylglycerol from sn-glycerol 3-phosphate: step 3/3. The protein is Phosphatidate cytidylyltransferase (cdsA) of Chlamydia pneumoniae (Chlamydophila pneumoniae).